The primary structure comprises 513 residues: HTH-type transcriptional regulatory protein TyrR (513 aa).

The region spanning 2 to 72 (RLEVFCEDRL…GVTDVRTVPW (71 aa)) is the ACT domain. The PAS domain occupies 78–114 (EHLALSALLEALPEPVLSVDMKSKVDMANPASCQLFG). Residues 206–428 (IVAVSPKMKH…LKNAIYRALT (223 aa)) enclose the Sigma-54 factor interaction domain. ATP contacts are provided by residues 234-241 (GDTGTGKD) and 290-299 (ANGGSVLLDE). Positions 482–502 (STRKLAKRLGVSHTAIANKLR) form a DNA-binding region, H-T-H motif.

As to quaternary structure, homodimer. In presence of tyrosine (or high concentrations of phenylalanine or tryptophan) and ATP, it self-associates to form an hexamer. At low tyrosine concentrations, homodimers can bind to certain recognition sequences referred to as 'strong TyrR boxes'. Homohexamers are the active repressing species, interacting with two or three tyrR boxes in the targeted regulatory DNA, including 'strong TyrR boxes' and lower-affinity sites called 'weak TyrR boxes'.

Its subcellular location is the cytoplasm. Its activity is regulated as follows. Binding of ATP strongly enhances the affinity of TyrR for tyrosine. Its function is as follows. Dual transcriptional regulator of the TyrR regulon, which includes a number of genes coding for proteins involved in the biosynthesis or transport of the three aromatic amino acids, phenylalanine, tyrosine and tryptophan. These three aromatic amino acids act as effectors which bind to the TyrR protein to form an active regulatory protein. Modulates the expression of at least eight unlinked transcription units, including aroF, aroG, aroLM, aroP, mtr, tyrA, tyrB and tyrP. In most cases TyrR acts as a repressor, but positive effects have been observed on the tyrP gene, which is repressed in the presence of tyrosine and activated at high phenylalanine concentrations. Is also involved in activation, but not repression, of mtr expression in association with phenylalanine or tyrosine. Acts by binding specifically to TyrR boxes in the promoter region of the target genes. The chain is HTH-type transcriptional regulatory protein TyrR from Escherichia coli (strain K12).